Consider the following 204-residue polypeptide: Holliday junction branch migration complex subunit RuvA (204 aa).

The interval 1–64 is domain I; sequence MIGRLQGILL…EDAHLLFGFA (64 aa). The segment at 65-143 is domain II; sequence QKTDRTLFRE…GVKQSDFFVE (79 aa). Positions 144–155 are flexible linker; sequence STHIPLSPSIES. Positions 156–204 are domain III; sequence HSESSSDEAISALIALGYKPAEAEKMVKRVAKPELTSEQVIREALKAAL.

Belongs to the RuvA family. In terms of assembly, homotetramer. Forms an RuvA(8)-RuvB(12)-Holliday junction (HJ) complex. HJ DNA is sandwiched between 2 RuvA tetramers; dsDNA enters through RuvA and exits via RuvB. An RuvB hexamer assembles on each DNA strand where it exits the tetramer. Each RuvB hexamer is contacted by two RuvA subunits (via domain III) on 2 adjacent RuvB subunits; this complex drives branch migration. In the full resolvosome a probable DNA-RuvA(4)-RuvB(12)-RuvC(2) complex forms which resolves the HJ.

It is found in the cytoplasm. Its function is as follows. The RuvA-RuvB-RuvC complex processes Holliday junction (HJ) DNA during genetic recombination and DNA repair, while the RuvA-RuvB complex plays an important role in the rescue of blocked DNA replication forks via replication fork reversal (RFR). RuvA specifically binds to HJ cruciform DNA, conferring on it an open structure. The RuvB hexamer acts as an ATP-dependent pump, pulling dsDNA into and through the RuvAB complex. HJ branch migration allows RuvC to scan DNA until it finds its consensus sequence, where it cleaves and resolves the cruciform DNA. This Haemophilus influenzae (strain PittGG) protein is Holliday junction branch migration complex subunit RuvA.